The sequence spans 143 residues: Large ribosomal subunit protein uL13 (143 aa).

The protein belongs to the universal ribosomal protein uL13 family. As to quaternary structure, part of the 50S ribosomal subunit.

In terms of biological role, this protein is one of the early assembly proteins of the 50S ribosomal subunit, although it is not seen to bind rRNA by itself. It is important during the early stages of 50S assembly. In Neisseria gonorrhoeae (strain ATCC 700825 / FA 1090), this protein is Large ribosomal subunit protein uL13.